A 716-amino-acid chain; its full sequence is Fatty acid oxidation complex subunit alpha (716 aa).

An enoyl-CoA hydratase/isomerase region spans residues 1–189 (MIYQSPTIQV…KVGAIDAVVA (189 aa)). Asp296 is a substrate binding site. A 3-hydroxyacyl-CoA dehydrogenase region spans residues 311-716 (KNIDTAAVLG…AANNGSYYQS (406 aa)). NAD(+) contacts are provided by residues Met324, Asp343, 400–402 (VVE), Lys407, and Ser429. His450 serves as the catalytic For 3-hydroxyacyl-CoA dehydrogenase activity. NAD(+) is bound at residue Asn453. Asn500 contributes to the substrate binding site.

It in the N-terminal section; belongs to the enoyl-CoA hydratase/isomerase family. This sequence in the C-terminal section; belongs to the 3-hydroxyacyl-CoA dehydrogenase family. As to quaternary structure, heterotetramer of two alpha chains (FadB) and two beta chains (FadA).

It catalyses the reaction a (3S)-3-hydroxyacyl-CoA + NAD(+) = a 3-oxoacyl-CoA + NADH + H(+). The catalysed reaction is a (3S)-3-hydroxyacyl-CoA = a (2E)-enoyl-CoA + H2O. The enzyme catalyses a 4-saturated-(3S)-3-hydroxyacyl-CoA = a (3E)-enoyl-CoA + H2O. It carries out the reaction (3S)-3-hydroxybutanoyl-CoA = (3R)-3-hydroxybutanoyl-CoA. It catalyses the reaction a (3Z)-enoyl-CoA = a 4-saturated (2E)-enoyl-CoA. The catalysed reaction is a (3E)-enoyl-CoA = a 4-saturated (2E)-enoyl-CoA. It participates in lipid metabolism; fatty acid beta-oxidation. In terms of biological role, involved in the aerobic and anaerobic degradation of long-chain fatty acids via beta-oxidation cycle. Catalyzes the formation of 3-oxoacyl-CoA from enoyl-CoA via L-3-hydroxyacyl-CoA. It can also use D-3-hydroxyacyl-CoA and cis-3-enoyl-CoA as substrate. In Shewanella sediminis (strain HAW-EB3), this protein is Fatty acid oxidation complex subunit alpha.